A 365-amino-acid chain; its full sequence is Probable protein kinase At2g41970 (365 aa).

The interval 1 to 50 (MFCCGGADEEPAGPPANQYAAPPNKAGNPNFGGGNRGEPRNPNAPRSGAP) is disordered. Residues 73–354 (FGNKALIGEG…IVVKALQPLL (282 aa)) enclose the Protein kinase domain. ATP is bound by residues 79–87 (IGEGSYGRV) and K100. Y146 carries the post-translational modification Phosphotyrosine. D204 serves as the catalytic Proton acceptor. Residues S208 and S238 each carry the phosphoserine modification. Residues T239 and T244 each carry the phosphothreonine modification. Y252 carries the phosphotyrosine modification.

This sequence belongs to the protein kinase superfamily. Tyr protein kinase family.

This chain is Probable protein kinase At2g41970, found in Arabidopsis thaliana (Mouse-ear cress).